The chain runs to 56 residues: Venom peptide 5 (56 aa).

Positions 1–26 are cleaved as a signal peptide; it reads MKTASFILSFVVLLIVIITWIGEVSA. The propeptide occupies 27-42; sequence VSEPEPVAKATAHAAA. Cysteine 49 and cysteine 54 are disulfide-bonded.

Probably contains 1 disulfide bond, which may be crucial for activity, since the linear peptide without disulfide bond is inactive. In terms of tissue distribution, expressed by the venom gland.

Its subcellular location is the secreted. The sequence is that of Venom peptide 5 from Eumenes pomiformis (Potter wasp).